The sequence spans 115 residues: DNA-directed RNA polymerase subunit Rpo4 (115 aa).

This sequence belongs to the eukaryotic RPB4 RNA polymerase subunit family. Part of the RNA polymerase complex. Forms a stalk with Rpo7 that extends from the main structure.

The protein resides in the cytoplasm. The catalysed reaction is RNA(n) + a ribonucleoside 5'-triphosphate = RNA(n+1) + diphosphate. DNA-dependent RNA polymerase (RNAP) catalyzes the transcription of DNA into RNA using the four ribonucleoside triphosphates as substrates. This subunit is less well bound than the others. This chain is DNA-directed RNA polymerase subunit Rpo4, found in Methanocaldococcus jannaschii (strain ATCC 43067 / DSM 2661 / JAL-1 / JCM 10045 / NBRC 100440) (Methanococcus jannaschii).